Here is a 268-residue protein sequence, read N- to C-terminus: Lipase (268 aa).

A signal peptide spans 1 to 34 (MRLSRRAATASALLLTPALALFGASAAVSAPRIQ). Catalysis depends on serine 44, which acts as the Nucleophile. Intrachain disulfides connect cysteine 61–cysteine 86, cysteine 127–cysteine 135, and cysteine 185–cysteine 232. The active site involves histidine 250.

Monomer.

The protein localises to the secreted. It carries out the reaction a triacylglycerol + H2O = a diacylglycerol + a fatty acid + H(+). It catalyses the reaction hexadecanoyl-CoA + H2O = hexadecanoate + CoA + H(+). With respect to regulation, inhibited by 3,4-dichloroisocoumarin and tetrahydrolipstatin in the absence of substrate, but by phenylmethylsulfonyl fluoride (PMSF) only in the presence of substrate. Several water-miscible solvents enhance the lipase hydrolytic activity in vitro. Tetrahydrofuran and N,N-dimethylformamide (both 50%) inactivate the enzyme with t1/2 of 5 minutes and t1/2 of 2 hours, respectively. Its function is as follows. Catalyzes the hydrolysis of p-nitrophenyl esters, alpha- and beta-naphthyl esters, and triacylglycerols, with a preference for medium acyl chain length (C8-C12). Shows a much higher hydrolysis rate of glycerol esters of unsaturated C16 and C18 fatty acids than that of their saturated counterparts, and a preference for cis double bond. Is also able to hydrolyze several natural oils and Tween detergents. Also displays thioesterase and phospholipase activities, towards palmitoyl-coenzyme A and diheptanoyl glycerophosphocholine, respectively. Shows transesterification activity of racemic 1-phenyl ethanol with vinyl acetate in hexane, proceeding with partial (R)-enantioselectivity. This is Lipase from Streptomyces rimosus.